The following is a 20-amino-acid chain: DELTA-actitoxin-Afr1b (20 aa).

This sequence belongs to the actinoporin family. Sea anemone subfamily. Octamer or nonamer in membranes. Monomer in the soluble state.

It localises to the secreted. The protein resides in the nematocyst. The protein localises to the target cell membrane. Pore-forming toxin (PFT) that consists of a crown-shaped octamer or nonamer that forms cation-selective hydrophilic pores of about 1.5 nm (inside) and 13 nm (outside) and causes cytolysis. It causes cardiac stimulation. Also causes hemolysis (HC(50)=0.4 nM). Interestingly, the Phe-16 is crucial for hemolysis. Pore formation is a multi-step process that involves specific recognition of membrane sphingomyelin (but neither cholesterol nor phosphatidylcholine) using aromatic rich region and adjacent phosphocholine (POC) binding site, firm binding to the membrane (mainly driven by hydrophobic interactions) accompanied by the transfer of the N-terminal region to the lipid-water interface and finally pore formation after oligomerization of monomers. It is probable that a dimeric form is an assembly intermediate before the complete oligomerization. The formation of stable pores occurs only in vesicles composed of DOPC/SM (there is no oligomerization when the PFT is treated with vesicles of DOPC or SM alone). The transmembrane pore displays 8 lateral perforations, one at each subunit-subunit interface, partially occupied by the acyl-chain region of a bridging lipid. Each pore contains 24 lipid molecules, firmly bound to each subunit, that is, 3 lipids (L1, L2, L3, L4 and/or L5) are associated to each subunit. Lipid L1 bridges 2 subunits, whereas lipids L2 and L3 bind to sites at single subunit. This is DELTA-actitoxin-Afr1b from Actinia fragacea (Strawberry anemone).